Consider the following 136-residue polypeptide: Probable disulfide formation protein (136 aa).

The helical transmembrane segment at 7 to 26 (NNALYFAWLICSTGTVMSIY) threads the bilayer. Residues C36 and C39 are joined by a disulfide bond. Transmembrane regions (helical) follow at residues 41–60 (YQRI…TYRE) and 67–84 (YALP…YQIC). Residues C96 and C101 are joined by a disulfide bond. Residues 109-133 (GFITVPMASALAFCAISCLLILSGS) traverse the membrane as a helical segment.

The protein belongs to the DsbB family. BdbC subfamily.

The protein localises to the cell inner membrane. Required for disulfide bond formation in some proteins. This chain is Probable disulfide formation protein, found in Chlamydia caviae (strain ATCC VR-813 / DSM 19441 / 03DC25 / GPIC) (Chlamydophila caviae).